We begin with the raw amino-acid sequence, 493 residues long: Glutamyl-tRNA(Gln) amidotransferase subunit A (493 aa).

Residues lysine 79 and serine 159 each act as charge relay system in the active site. Serine 183 functions as the Acyl-ester intermediate in the catalytic mechanism.

Belongs to the amidase family. GatA subfamily. As to quaternary structure, heterotrimer of A, B and C subunits.

It catalyses the reaction L-glutamyl-tRNA(Gln) + L-glutamine + ATP + H2O = L-glutaminyl-tRNA(Gln) + L-glutamate + ADP + phosphate + H(+). Allows the formation of correctly charged Gln-tRNA(Gln) through the transamidation of misacylated Glu-tRNA(Gln) in organisms which lack glutaminyl-tRNA synthetase. The reaction takes place in the presence of glutamine and ATP through an activated gamma-phospho-Glu-tRNA(Gln). The polypeptide is Glutamyl-tRNA(Gln) amidotransferase subunit A (Brucella ovis (strain ATCC 25840 / 63/290 / NCTC 10512)).